A 145-amino-acid chain; its full sequence is FAD synthase (145 aa).

Residues 9–10 (TF), 14–17 (HPGH), aspartate 94, and tyrosine 122 contribute to the ATP site.

This sequence belongs to the archaeal FAD synthase family. Homodimer. It depends on a divalent metal cation as a cofactor.

The enzyme catalyses FMN + ATP + H(+) = FAD + diphosphate. Its pathway is cofactor biosynthesis; FAD biosynthesis; FAD from FMN: step 1/1. Its function is as follows. Catalyzes the transfer of the AMP portion of ATP to flavin mononucleotide (FMN) to produce flavin adenine dinucleotide (FAD) coenzyme. The sequence is that of FAD synthase from Methanocaldococcus infernus (strain DSM 11812 / JCM 15783 / ME).